An 895-amino-acid chain; its full sequence is DNA double-strand break repair Rad50 ATPase (895 aa).

ATP contacts are provided by residues 32–38 (NGAGKSS) and Gln137. A coiled-coil region spans residues 183-253 (SDYDYLKNEL…LNAQLETIKK (71 aa)). One can recognise a Zinc-hook domain in the interval 411–507 (RAEINSSLMQ…ERKHQKKLLD (97 aa)). The Zn(2+) site is built by Cys455 and Cys458. Coiled coils occupy residues 464 to 510 (TEKS…DRIN) and 618 to 647 (ENSL…AMDE).

Belongs to the SMC family. RAD50 subfamily. In terms of assembly, homodimer. Forms a heterotetramer composed of two Mre11 subunits and two Rad50 subunits. Requires Zn(2+) as cofactor.

Part of the Rad50/Mre11 complex, which is involved in the early steps of DNA double-strand break (DSB) repair. The complex may facilitate opening of the processed DNA ends to aid in the recruitment of HerA and NurA. Rad50 controls the balance between DNA end bridging and DNA resection via ATP-dependent structural rearrangements of the Rad50/Mre11 complex. The sequence is that of DNA double-strand break repair Rad50 ATPase from Thermoplasma volcanium (strain ATCC 51530 / DSM 4299 / JCM 9571 / NBRC 15438 / GSS1).